Here is a 211-residue protein sequence, read N- to C-terminus: MTEIQKLTNNKEIIAYLAEKFPLCFSLEGEAKPLKIGLFQDLAEALANDEKVSKTQLRQALRQYTSNWRYLHGCRAGAVRVDLNGEPAGILEQEHVEHAAAKLAEAKAKVAERRAVEKANNPKANKKRSVHHSGNKSENKKSAGKKFSNPRQVEQIFVNVDLANLQKGDVVRVKAGDKTTKAEILEVVKEGARVELENGLILTVSADRLFA.

The disordered stretch occupies residues 112–148; the sequence is ERRAVEKANNPKANKKRSVHHSGNKSENKKSAGKKFS. Basic residues predominate over residues 124–134; the sequence is ANKKRSVHHSG.

This sequence belongs to the ProQ family.

It localises to the cytoplasm. RNA chaperone with significant RNA binding, RNA strand exchange and RNA duplexing activities. This chain is RNA chaperone ProQ, found in Histophilus somni (strain 2336) (Haemophilus somnus).